We begin with the raw amino-acid sequence, 38 residues long: Photosystem II reaction center protein L (38 aa).

Residues 17-37 (SLYWGLLLIFVLAVLFSNYFF) traverse the membrane as a helical segment.

Belongs to the PsbL family. PSII is composed of 1 copy each of membrane proteins PsbA, PsbB, PsbC, PsbD, PsbE, PsbF, PsbH, PsbI, PsbJ, PsbK, PsbL, PsbM, PsbT, PsbX, PsbY, PsbZ, Psb30/Ycf12, at least 3 peripheral proteins of the oxygen-evolving complex and a large number of cofactors. It forms dimeric complexes.

The protein resides in the plastid. Its subcellular location is the chloroplast thylakoid membrane. Its function is as follows. One of the components of the core complex of photosystem II (PSII). PSII is a light-driven water:plastoquinone oxidoreductase that uses light energy to abstract electrons from H(2)O, generating O(2) and a proton gradient subsequently used for ATP formation. It consists of a core antenna complex that captures photons, and an electron transfer chain that converts photonic excitation into a charge separation. This subunit is found at the monomer-monomer interface and is required for correct PSII assembly and/or dimerization. The chain is Photosystem II reaction center protein L from Gnetum gnemon (Spanish joint-fir).